The following is a 265-amino-acid chain: 5'-nucleotidase SurE (265 aa).

A divalent metal cation-binding residues include D8, D9, S39, and N96.

Belongs to the SurE nucleotidase family. Requires a divalent metal cation as cofactor.

The protein localises to the cytoplasm. The catalysed reaction is a ribonucleoside 5'-phosphate + H2O = a ribonucleoside + phosphate. Its function is as follows. Nucleotidase that shows phosphatase activity on nucleoside 5'-monophosphates. This is 5'-nucleotidase SurE from Dehalococcoides mccartyi (strain ATCC BAA-2266 / KCTC 15142 / 195) (Dehalococcoides ethenogenes (strain 195)).